Here is a 354-residue protein sequence, read N- to C-terminus: DNA polymerase IV (354 aa).

A UmuC domain is found at 6–187 (IIHVDCDCFY…LPVARLHGVG (182 aa)). Mg(2+) is bound by residues Asp10 and Asp105. Glu106 is a catalytic residue.

It belongs to the DNA polymerase type-Y family. Monomer. Mg(2+) is required as a cofactor.

The protein localises to the cytoplasm. It catalyses the reaction DNA(n) + a 2'-deoxyribonucleoside 5'-triphosphate = DNA(n+1) + diphosphate. Functionally, poorly processive, error-prone DNA polymerase involved in untargeted mutagenesis. Copies undamaged DNA at stalled replication forks, which arise in vivo from mismatched or misaligned primer ends. These misaligned primers can be extended by PolIV. Exhibits no 3'-5' exonuclease (proofreading) activity. May be involved in translesional synthesis, in conjunction with the beta clamp from PolIII. The protein is DNA polymerase IV of Pseudomonas putida (strain GB-1).